Here is a 217-residue protein sequence, read N- to C-terminus: Claudin-9 (217 aa).

Over 1–12 the chain is Cytoplasmic; it reads MASTGLELLGMT. A helical membrane pass occupies residues 13–33; it reads LAVLGWLGTLVSCALPLWKVT. The Extracellular portion of the chain corresponds to 34–81; it reads AFIGNSIVVAQVVWEGLWMSCVVQSTGQMQCKVYDSLLALPQDLQAAR. The helical transmembrane segment at 82–102 threads the bilayer; that stretch reads ALCVVALLLALLGLLVAITGA. Over 103–116 the chain is Cytoplasmic; sequence QCTTCVEDEGAKAR. The chain crosses the membrane as a helical span at residues 117–137; sequence IVLTAGVLLLLSGILVLIPVC. Over 138 to 159 the chain is Extracellular; the sequence is WTAHAIIQDFYNPLVAEALKRE. Residues 160–180 traverse the membrane as a helical segment; that stretch reads LGASLYLGWAAAALLMLGGGL. The Cytoplasmic portion of the chain corresponds to 181-217; it reads LCCTCPPSHFERPRGPRLGYSIPSRSGASGLDKRDYV.

The protein belongs to the claudin family. Interacts with CLDN1, CD81 and OCLN.

It is found in the cell junction. Its subcellular location is the tight junction. The protein localises to the cell membrane. Plays a major role in tight junction-specific obliteration of the intercellular space, through calcium-independent cell-adhesion activity. This Mus musculus (Mouse) protein is Claudin-9 (Cldn9).